Consider the following 201-residue polypeptide: tRNA (guanine-N(7)-)-methyltransferase (201 aa).

4 residues coordinate S-adenosyl-L-methionine: Glu-33, Glu-58, Asp-85, and Asp-106. The active site involves Asp-106. Substrate-binding positions include Lys-110, Asp-142, and 180-183 (TTYE).

The protein belongs to the class I-like SAM-binding methyltransferase superfamily. TrmB family.

It catalyses the reaction guanosine(46) in tRNA + S-adenosyl-L-methionine = N(7)-methylguanosine(46) in tRNA + S-adenosyl-L-homocysteine. It participates in tRNA modification; N(7)-methylguanine-tRNA biosynthesis. Catalyzes the formation of N(7)-methylguanine at position 46 (m7G46) in tRNA. The sequence is that of tRNA (guanine-N(7)-)-methyltransferase from Mesomycoplasma hyopneumoniae (strain J / ATCC 25934 / NCTC 10110) (Mycoplasma hyopneumoniae).